The chain runs to 419 residues: Gamma-glutamyl phosphate reductase (419 aa).

Belongs to the gamma-glutamyl phosphate reductase family.

Its subcellular location is the cytoplasm. It catalyses the reaction L-glutamate 5-semialdehyde + phosphate + NADP(+) = L-glutamyl 5-phosphate + NADPH + H(+). Its pathway is amino-acid biosynthesis; L-proline biosynthesis; L-glutamate 5-semialdehyde from L-glutamate: step 2/2. In terms of biological role, catalyzes the NADPH-dependent reduction of L-glutamate 5-phosphate into L-glutamate 5-semialdehyde and phosphate. The product spontaneously undergoes cyclization to form 1-pyrroline-5-carboxylate. The sequence is that of Gamma-glutamyl phosphate reductase from Oleidesulfovibrio alaskensis (strain ATCC BAA-1058 / DSM 17464 / G20) (Desulfovibrio alaskensis).